The sequence spans 129 residues: Small ribosomal subunit protein uS11 (129 aa).

Belongs to the universal ribosomal protein uS11 family. In terms of assembly, part of the 30S ribosomal subunit. Interacts with proteins S7 and S18. Binds to IF-3.

In terms of biological role, located on the platform of the 30S subunit, it bridges several disparate RNA helices of the 16S rRNA. Forms part of the Shine-Dalgarno cleft in the 70S ribosome. In Methylobacterium sp. (strain 4-46), this protein is Small ribosomal subunit protein uS11.